A 1407-amino-acid polypeptide reads, in one-letter code: E3 ubiquitin-protein ligase linker protein MMS1 (1407 aa).

The tract at residues Met1–Ile600 is required for interaction with MMS22. Thr1294 is modified (phosphothreonine).

As to quaternary structure, component of multiple cullin-RING ligases (CRLs) composed of 4 subunits: the RING protein HRT1, the cullin RTT101, a linker protein MMS1, and one of many alternative substrate receptors belonging to a protein family described as DCAF (DDB1- and CUL4-associated factor). Component of a RTT101(MMS1-MMS22) complex with the substrate receptor MMS22. This complex further interacts with RTT107 and CTF4 to form RTT101-MMS1-MMS22-RTT107 and RTT101-MMS1-MMS22-CTF4 complexes respectively. Component of a RTT101(MSS1-CRT10) complex with the substrate receptor CRT10. Component of a RTT101(MSS1-ESC2) complex with the potential substrate receptor ESC2. Component of a RTT101(MSS1-ORC5) complex with the potential substrate receptor ORC5. Interacts with RTT101 (via N-ter). Interacts (via N-ter) with MMS22 (via C-ter). Interacts with CRT10.

It is found in the nucleus. Its function is as follows. Component of multiple cullin-RING-based E3 ubiquitin-protein ligase complexes (CRLs), which mediate the ubiquitination of target proteins. The CRL associates with CDC34 as the E2 ubiquitin-conjugating enzyme. The functional specificity of the CRL depends on the type of the associated substrate receptor protein. RTT101(MMS1-MMS22) promotes fork progression through damaged DNA or natural pause sites by stabilizing replication proteins like the replication fork-pausing complex (FPC) and leading-strand polymerase at stalled replication forks. RTT101(MMS1-MMS22) ubiquitinates the acetylated histones H3K56ac-H4 at lysine residues H3K121, H3K122 and H3K125. Ubiquitination is required for efficient histone deposition during replication-coupled nucleosome assembly, probably by facilitating the transfer of H3-H4 from ASF1 to other chaperones involved in histone deposition. RTT101(MMS1-CRT10) may regulate nucleotide synthesis through transcriptional regulation of ribonucleotide reductase. RTT101(MMS1) is also involved in the non-functional rRNA decay (NRD) of 25S rRNA through the selective, ubiquitination-dependent degradation of nonfunctional ribosomal particles. Involved in the regulation of TY1 transposition. The sequence is that of E3 ubiquitin-protein ligase linker protein MMS1 (MMS1) from Saccharomyces cerevisiae (strain ATCC 204508 / S288c) (Baker's yeast).